The chain runs to 150 residues: Guanine nucleotide-binding protein subunit gamma 2 (150 aa).

Over residues 1-11 (MRGEANGEEEQ) the composition is skewed to acidic residues. The interval 1–59 (MRGEANGEEEQQPPRRNHLRDDAEEEEEVERRAARPVSGQQQQQQRRRPTDVGGGAAMR) is disordered. The stretch at 65–97 (GKHRLSAAIARLDQELQSLQDELNELETMEPAS) forms a coiled coil. Positions 71–137 (AAIARLDQEL…RWFQRVRSSR (67 aa)) constitute a G protein gamma domain.

G proteins are composed of 3 units, alpha, beta and gamma. Interacts with the beta subunit RGB1.

The protein resides in the cell membrane. Guanine nucleotide-binding proteins (G proteins) are involved as modulators or transducers in various transmembrane signaling systems. The sequence is that of Guanine nucleotide-binding protein subunit gamma 2 from Oryza sativa subsp. indica (Rice).